Reading from the N-terminus, the 599-residue chain is CAP-Gly domain-containing linker protein 4 (599 aa).

3 ANK repeats span residues 65–101 (TSVSELFAILRQWVPQVQQNIDIIGNEILKRGCNVND), 149–180 (TNMNALHYASYFDVPELIRVLLKTSKPKDVDA), and 186–215 (NFGTALHIAAHNLCAGAVKTLLELGANPAF). A CAP-Gly 1 domain is found at 303–345 (GTTEFASGQWAGIELDEPEGKNNGSVGRVQYFKCAPKYGIFAP). Residues 387 to 482 (SGLMTSKKEN…TSAANNTHRE (96 aa)) are disordered. Residues 443 to 462 (LSTSSSSGKKTLSKSPSLPS) show a composition bias toward low complexity. Residues 468–478 (LKSSTTSAANN) are compositionally biased toward polar residues. Positions 505–547 (GTTNFAPGYWYGIELEKPHGKNDGSVGGVQYFSCSPRYGIFAP) constitute a CAP-Gly 2 domain. The residue at position 557 (Ser-557) is a Phosphoserine. The interval 565–599 (SSNKQNHSYPGFRRSFSTTSASSQKEINRRNAFAK) is disordered. Low complexity predominate over residues 576 to 587 (FRRSFSTTSASS).

The chain is CAP-Gly domain-containing linker protein 4 (Clip4) from Rattus norvegicus (Rat).